A 475-amino-acid chain; its full sequence is Argininosuccinate lyase 1 (475 aa).

It belongs to the lyase 1 family. Argininosuccinate lyase subfamily.

The protein localises to the cytoplasm. The enzyme catalyses 2-(N(omega)-L-arginino)succinate = fumarate + L-arginine. It functions in the pathway amino-acid biosynthesis; L-arginine biosynthesis; L-arginine from L-ornithine and carbamoyl phosphate: step 3/3. This is Argininosuccinate lyase 1 from Pseudomonas fluorescens (strain Pf0-1).